A 467-amino-acid chain; its full sequence is Methylenetetrahydrofolate--tRNA-(uracil-5-)-methyltransferase TrmFO (467 aa).

10-15 (GGGMAG) contacts FAD.

The protein belongs to the MnmG family. TrmFO subfamily. FAD is required as a cofactor.

It is found in the cytoplasm. The enzyme catalyses uridine(54) in tRNA + (6R)-5,10-methylene-5,6,7,8-tetrahydrofolate + NADH + H(+) = 5-methyluridine(54) in tRNA + (6S)-5,6,7,8-tetrahydrofolate + NAD(+). The catalysed reaction is uridine(54) in tRNA + (6R)-5,10-methylene-5,6,7,8-tetrahydrofolate + NADPH + H(+) = 5-methyluridine(54) in tRNA + (6S)-5,6,7,8-tetrahydrofolate + NADP(+). In terms of biological role, catalyzes the folate-dependent formation of 5-methyl-uridine at position 54 (M-5-U54) in all tRNAs. In Hyphomonas neptunium (strain ATCC 15444), this protein is Methylenetetrahydrofolate--tRNA-(uracil-5-)-methyltransferase TrmFO.